We begin with the raw amino-acid sequence, 431 residues long: Serine--tRNA ligase (431 aa).

Residue T238–E240 coordinates L-serine. An ATP-binding site is contributed by R269–E271. E292 serves as a coordination point for L-serine. E356–S359 is an ATP binding site. L-serine is bound at residue S391.

Belongs to the class-II aminoacyl-tRNA synthetase family. Type-1 seryl-tRNA synthetase subfamily. As to quaternary structure, homodimer. The tRNA molecule binds across the dimer.

It localises to the cytoplasm. It carries out the reaction tRNA(Ser) + L-serine + ATP = L-seryl-tRNA(Ser) + AMP + diphosphate + H(+). It catalyses the reaction tRNA(Sec) + L-serine + ATP = L-seryl-tRNA(Sec) + AMP + diphosphate + H(+). It participates in aminoacyl-tRNA biosynthesis; selenocysteinyl-tRNA(Sec) biosynthesis; L-seryl-tRNA(Sec) from L-serine and tRNA(Sec): step 1/1. Catalyzes the attachment of serine to tRNA(Ser). Is also able to aminoacylate tRNA(Sec) with serine, to form the misacylated tRNA L-seryl-tRNA(Sec), which will be further converted into selenocysteinyl-tRNA(Sec). The polypeptide is Serine--tRNA ligase (Bdellovibrio bacteriovorus (strain ATCC 15356 / DSM 50701 / NCIMB 9529 / HD100)).